We begin with the raw amino-acid sequence, 184 residues long: Cell division protein ZapC (184 aa).

Belongs to the ZapC family. In terms of assembly, interacts directly with FtsZ.

It is found in the cytoplasm. Contributes to the efficiency of the cell division process by stabilizing the polymeric form of the cell division protein FtsZ. Acts by promoting interactions between FtsZ protofilaments and suppressing the GTPase activity of FtsZ. This Idiomarina loihiensis (strain ATCC BAA-735 / DSM 15497 / L2-TR) protein is Cell division protein ZapC.